The primary structure comprises 469 residues: Tubulin gamma-2 chain (469 aa).

142–148 is a GTP binding site; that stretch reads AGGTGSG.

It belongs to the tubulin family.

It is found in the cytoplasm. Its subcellular location is the cytoskeleton. It localises to the microtubule organizing center. Tubulin is the major constituent of microtubules. The gamma chain is found at microtubule organizing centers (MTOC) such as the spindle poles, suggesting that it is involved in the minus-end nucleation of microtubule assembly. The polypeptide is Tubulin gamma-2 chain (TUBG2) (Zea mays (Maize)).